Reading from the N-terminus, the 156-residue chain is Small ribosomal subunit protein uS7 (156 aa).

It belongs to the universal ribosomal protein uS7 family. In terms of assembly, part of the 30S ribosomal subunit. Contacts proteins S9 and S11.

One of the primary rRNA binding proteins, it binds directly to 16S rRNA where it nucleates assembly of the head domain of the 30S subunit. Is located at the subunit interface close to the decoding center, probably blocks exit of the E-site tRNA. The polypeptide is Small ribosomal subunit protein uS7 (Yersinia enterocolitica serotype O:8 / biotype 1B (strain NCTC 13174 / 8081)).